Reading from the N-terminus, the 186-residue chain is Large ribosomal subunit protein uL10 (186 aa).

The protein belongs to the universal ribosomal protein uL10 family. Part of the ribosomal stalk of the 50S ribosomal subunit. The N-terminus interacts with L11 and the large rRNA to form the base of the stalk. The C-terminus forms an elongated spine to which L12 dimers bind in a sequential fashion forming a multimeric L10(L12)X complex.

Forms part of the ribosomal stalk, playing a central role in the interaction of the ribosome with GTP-bound translation factors. This chain is Large ribosomal subunit protein uL10, found in Rhodococcus jostii (strain RHA1).